A 611-amino-acid chain; its full sequence is Aspartate--tRNA(Asp/Asn) ligase (611 aa).

E177 is an L-aspartate binding site. The tract at residues 201–204 (QLFK) is aspartate. R223 serves as a coordination point for L-aspartate. ATP-binding positions include 223–225 (RDE) and Q232. H461 provides a ligand contact to L-aspartate. E499 is a binding site for ATP. R506 is a binding site for L-aspartate. An ATP-binding site is contributed by 551–554 (GVDR).

This sequence belongs to the class-II aminoacyl-tRNA synthetase family. Type 1 subfamily. In terms of assembly, homodimer.

It is found in the cytoplasm. It catalyses the reaction tRNA(Asx) + L-aspartate + ATP = L-aspartyl-tRNA(Asx) + AMP + diphosphate. Aspartyl-tRNA synthetase with relaxed tRNA specificity since it is able to aspartylate not only its cognate tRNA(Asp) but also tRNA(Asn). Reaction proceeds in two steps: L-aspartate is first activated by ATP to form Asp-AMP and then transferred to the acceptor end of tRNA(Asp/Asn). This Synechococcus sp. (strain WH7803) protein is Aspartate--tRNA(Asp/Asn) ligase.